Here is a 242-residue protein sequence, read N- to C-terminus: Pyridoxine 5'-phosphate synthase (242 aa).

Position 6 (Asn-6) interacts with 3-amino-2-oxopropyl phosphate. Residue 8–9 (DH) participates in 1-deoxy-D-xylulose 5-phosphate binding. Arg-17 is a binding site for 3-amino-2-oxopropyl phosphate. His-42 (proton acceptor) is an active-site residue. 1-deoxy-D-xylulose 5-phosphate contacts are provided by Arg-44 and His-49. Glu-69 acts as the Proton acceptor in catalysis. Thr-99 contributes to the 1-deoxy-D-xylulose 5-phosphate binding site. The Proton donor role is filled by His-190. 3-amino-2-oxopropyl phosphate-binding positions include Gly-191 and 212–213 (GH).

It belongs to the PNP synthase family. In terms of assembly, homooctamer; tetramer of dimers.

The protein resides in the cytoplasm. It carries out the reaction 3-amino-2-oxopropyl phosphate + 1-deoxy-D-xylulose 5-phosphate = pyridoxine 5'-phosphate + phosphate + 2 H2O + H(+). Its pathway is cofactor biosynthesis; pyridoxine 5'-phosphate biosynthesis; pyridoxine 5'-phosphate from D-erythrose 4-phosphate: step 5/5. Its function is as follows. Catalyzes the complicated ring closure reaction between the two acyclic compounds 1-deoxy-D-xylulose-5-phosphate (DXP) and 3-amino-2-oxopropyl phosphate (1-amino-acetone-3-phosphate or AAP) to form pyridoxine 5'-phosphate (PNP) and inorganic phosphate. This is Pyridoxine 5'-phosphate synthase from Neisseria meningitidis serogroup C.